Here is a 314-residue protein sequence, read N- to C-terminus: O-antigen chain rhamnosyltransferase RfbN (314 aa).

It belongs to the glycosyltransferase 2 family.

The enzyme catalyses alpha-D-galactosyl-di-trans,octa-cis-undecaprenyl diphosphate + dTDP-beta-L-rhamnose = alpha-L-rhamnosyl-(1-&gt;3)-alpha-D-galactosyl-1-diphospho-di-trans,octa-cis-undecaprenol + dTDP + H(+). Its pathway is bacterial outer membrane biogenesis; LPS O-antigen biosynthesis. Its function is as follows. Rhamnosyltransferase involved in the biosynthesis of the repeat unit of the lipopolysaccharide (LPS) O-antigen region. Catalyzes the addition of a rhamnose to the galactosyl-undecaprenyl diphosphate intermediate. This chain is O-antigen chain rhamnosyltransferase RfbN, found in Salmonella typhimurium (strain LT2 / SGSC1412 / ATCC 700720).